Here is a 272-residue protein sequence, read N- to C-terminus: Hydroxyethylthiazole kinase (272 aa).

Position 44 (Met-44) interacts with substrate. ATP is bound by residues Lys-119 and Thr-172. Gly-199 contacts substrate.

The protein belongs to the Thz kinase family. Mg(2+) is required as a cofactor.

The enzyme catalyses 5-(2-hydroxyethyl)-4-methylthiazole + ATP = 4-methyl-5-(2-phosphooxyethyl)-thiazole + ADP + H(+). It participates in cofactor biosynthesis; thiamine diphosphate biosynthesis; 4-methyl-5-(2-phosphoethyl)-thiazole from 5-(2-hydroxyethyl)-4-methylthiazole: step 1/1. Functionally, catalyzes the phosphorylation of the hydroxyl group of 4-methyl-5-beta-hydroxyethylthiazole (THZ). The chain is Hydroxyethylthiazole kinase from Enterococcus faecalis (strain ATCC 700802 / V583).